A 280-amino-acid chain; its full sequence is Undecaprenyl-diphosphatase (280 aa).

A run of 8 helical transmembrane segments spans residues 1 to 21 (MEWI…FLPI), 40 to 60 (GAAF…VFFW), 89 to 109 (WLVV…QNAI), 116 to 136 (LWIV…ADAV), 146 to 166 (LTVK…IPGV), 191 to 211 (FLLA…KIVA), 227 to 247 (LATV…LKFI), and 260 to 280 (IALG…ATLS).

It belongs to the UppP family.

It localises to the cell membrane. It carries out the reaction di-trans,octa-cis-undecaprenyl diphosphate + H2O = di-trans,octa-cis-undecaprenyl phosphate + phosphate + H(+). Its function is as follows. Catalyzes the dephosphorylation of undecaprenyl diphosphate (UPP). Confers resistance to bacitracin. This Renibacterium salmoninarum (strain ATCC 33209 / DSM 20767 / JCM 11484 / NBRC 15589 / NCIMB 2235) protein is Undecaprenyl-diphosphatase.